The primary structure comprises 247 residues: Sec-independent protein translocase protein TatC (247 aa).

Helical transmembrane passes span 21–41 (IILLSFFLAFFVGLFVSKPLI), 71–91 (AFIIGLILVFPVILYQLWAFV), 109–129 (ITFLLFLCGVVFSYVITFPFI), 154–174 (FLLQIVLSFGVLFELPMVIML), and 195–215 (FCLLIIAAFIAPPEILSHLMI).

This sequence belongs to the TatC family. Forms a complex with TatA.

The protein resides in the cell membrane. Its function is as follows. Part of the twin-arginine translocation (Tat) system that transports large folded proteins containing a characteristic twin-arginine motif in their signal peptide across membranes. This chain is Sec-independent protein translocase protein TatC, found in Listeria innocua serovar 6a (strain ATCC BAA-680 / CLIP 11262).